We begin with the raw amino-acid sequence, 352 residues long: Guanine nucleotide-binding protein alpha-7 subunit (352 aa).

Residue G2 is the site of N-myristoyl glycine attachment. Residue C4 is the site of S-palmitoyl cysteine attachment. The G-alpha domain occupies 32 to 352; sequence RIIKLLLLGA…AKNLKSMGLC (321 aa). The interval 35 to 48 is G1 motif; it reads KLLLLGAGESGKST. GTP is bound by residues 40 to 47, 174 to 180, 199 to 203, 268 to 271, and A324; these read GAGESGKS, LRTRIKT, DVGGQ, and NKKD. Positions 47 and 180 each coordinate Mg(2+). A G2 motif region spans residues 172–180; it reads DLLRTRIKT. The tract at residues 195 to 204 is G3 motif; that stretch reads FRVIDVGGQR. The G4 motif stretch occupies residues 264–271; it reads ILFLNKKD. The G5 motif stretch occupies residues 322 to 327; that stretch reads TCATDT.

The protein belongs to the G-alpha family. G(i/o/t/z) subfamily. G proteins are composed of 3 units; alpha, beta and gamma. The alpha chain contains the guanine nucleotide binding site.

In terms of biological role, guanine nucleotide-binding proteins (G proteins) are involved as modulators or transducers in various transmembrane signaling systems. The protein is Guanine nucleotide-binding protein alpha-7 subunit (gpa-7) of Caenorhabditis briggsae.